We begin with the raw amino-acid sequence, 1404 residues long: DNA-directed RNA polymerase subunit beta' (1404 aa).

The Zn(2+) site is built by Cys70, Cys72, Cys85, and Cys88. The Mg(2+) site is built by Asp460, Asp462, and Asp464. Residues Cys814, Cys888, Cys895, and Cys898 each coordinate Zn(2+).

The protein belongs to the RNA polymerase beta' chain family. As to quaternary structure, the RNAP catalytic core consists of 2 alpha, 1 beta, 1 beta' and 1 omega subunit. When a sigma factor is associated with the core the holoenzyme is formed, which can initiate transcription. The cofactor is Mg(2+). Zn(2+) serves as cofactor.

The catalysed reaction is RNA(n) + a ribonucleoside 5'-triphosphate = RNA(n+1) + diphosphate. In terms of biological role, DNA-dependent RNA polymerase catalyzes the transcription of DNA into RNA using the four ribonucleoside triphosphates as substrates. This is DNA-directed RNA polymerase subunit beta' from Shewanella pealeana (strain ATCC 700345 / ANG-SQ1).